The chain runs to 587 residues: Formate--tetrahydrofolate ligase (587 aa).

Residue 73–80 participates in ATP binding; the sequence is TPLGEGKS.

The protein belongs to the formate--tetrahydrofolate ligase family.

The enzyme catalyses (6S)-5,6,7,8-tetrahydrofolate + formate + ATP = (6R)-10-formyltetrahydrofolate + ADP + phosphate. Its pathway is one-carbon metabolism; tetrahydrofolate interconversion. The protein is Formate--tetrahydrofolate ligase of Desulfosudis oleivorans (strain DSM 6200 / JCM 39069 / Hxd3) (Desulfococcus oleovorans).